The sequence spans 79 residues: MAGGRRGGRAKRRKVCFFTSNGITHIDYKDVDLLRKFVSERGKILPRRVTGTSAKYQRKLTLAIKKSRQMALLPYVTGE.

The protein belongs to the bacterial ribosomal protein bS18 family. Part of the 30S ribosomal subunit. Forms a tight heterodimer with protein bS6.

Its function is as follows. Binds as a heterodimer with protein bS6 to the central domain of the 16S rRNA, where it helps stabilize the platform of the 30S subunit. The sequence is that of Small ribosomal subunit protein bS18 from Bacillus pumilus (strain SAFR-032).